The primary structure comprises 79 residues: Calcium/calmodulin-dependent protein kinase II inhibitor 2 (79 aa).

Positions 1 to 21 are disordered; it reads MSEILPYSEDKMGRFGADPEG. Positions 43–69 are inhibitory domain; sequence KRPPKLGQIGRAKRVVIEDDRIDDVLK.

It belongs to the CAMK2N family. As to quaternary structure, interacts with CAMK2A and CAMK2B in the presence of Ca(2+)/calmodulin or after autophosphorylation.

It localises to the nucleus. The protein resides in the cytoplasm. Its subcellular location is the cytosol. It is found in the synapse. Its function is as follows. Potent and specific cellular inhibitor of CaM-kinase II (CAMK2). Traps Ca(2+)/calmodulin on CAMK2. The polypeptide is Calcium/calmodulin-dependent protein kinase II inhibitor 2 (CAMK2N2) (Bos taurus (Bovine)).